The chain runs to 514 residues: Respiratory nitrate reductase 2 beta chain (514 aa).

4Fe-4S ferredoxin-type domains follow at residues 7 to 35, 174 to 205, and 207 to 236; these read VGMV…GREG, TFMM…KREE, and GIVL…FNWK. [4Fe-4S] cluster is bound by residues Cys-16, Cys-19, Cys-22, Cys-26, Cys-183, Cys-186, and Cys-191. Residues Cys-195, Cys-216, and Cys-222 each coordinate [3Fe-4S] cluster. Residues Cys-226, Cys-243, Cys-246, Cys-258, and Cys-262 each contribute to the [4Fe-4S] cluster site.

Dimer of heterotrimers each composed of an alpha, a beta and a gamma chain. Alpha and beta are catalytic chains; gamma chains are involved in binding the enzyme complex to the cytoplasmic membrane. The cofactor is [4Fe-4S] cluster. [3Fe-4S] cluster is required as a cofactor.

It is found in the cell membrane. The catalysed reaction is nitrate + a quinol = a quinone + nitrite + H2O. This is a second nitrate reductase enzyme which can substitute for the NRA enzyme and allows E.coli to use nitrate as an electron acceptor during anaerobic growth. The beta chain is an electron transfer unit containing four cysteine clusters involved in the formation of iron-sulfur centers. Electrons are transferred from the gamma chain to the molybdenum cofactor of the alpha subunit. The sequence is that of Respiratory nitrate reductase 2 beta chain (narY) from Escherichia coli (strain K12).